Consider the following 1812-residue polypeptide: MDLSAVQIQEVQNVLHAMQKILECPICLELIKEPVSTKCDHIFCKFCMLKLLNQKKGPSQCPLCKNEITKRSLQGSTRFSQLAEELLRIMAAFELDTGMQLTNGFSFSKKRNNSCERLNEEASIIQSVGYRNRVRRLPQVEPGNATLKDSLGVQLSNLGIVRSVKKNRQTQPRKKSVYIELDSDSSEETVTKPGDCSVRDQELLQTAPQEAGDEGKLHSAEEAACEFSEGIRNIEHHQCSDDLNPTENHATERHPEKCQSISISNVCVEPCGTDAHASSLQPETSSLLLIEDRMNAEKAEFCNKSKQPGIAVSQQSRWAASKGTCNDRQVPSTGEKVGPNADSLSDREKWTHPQSLCPENSGATTDVPWITLNSSVQKVNEWFSRTGEMLTSDSASARRHESNAEAAVVLEVSNEVDGGFSSSRKTDLVTPDPHHTLMCKSGRDFSKPVEDNISDKIFGKSYQRKGSRPHLNHVTEIIGTFITEPQITQEQPFTNKLKRKRSTSLQPEDFIKKADSAGVQRTPDNINQGTDLMEPNEQAVSTTSNCQENKIAGSNLQKEKSAHPTESLRKEPASTAGAKSISNSVSDLEVELNVHSSKAPKKNRLRRKSSIRCALPLEPISRNPSPPTCAELQIDSCGSSEETKKNHSNQQPAGHLREPQLIEDTEPAADAKKNEPNEHIRKRRASDAFPEEKLMNKAGLLTSCSSPRKSQGPVNPSPQRTGTEQLETRQMSDSAKELGDRVLGGEPSGKTTDRSEESTSVSLVSDTDYDTQNSVSVLDAHTVRYARTGSAQCMTQFVASENPKELVHGSNNAGSGTEGLKPPLRHALNLSQEKVEMEDSELDTQYLQNTFQVSKRQSFALFSKPRSPQKDCAHSVPSKELSPKVTAKGKQKERQGQEEFEISHVQAVAATVGLPVPCQEGKLAADTMCDRGCRLCPSSHYRSGENGLSATGKSGISQNSHFKQSVSPIRSSIKTDNRKPLTEGRFERHTSSTEMAVGNENILQSTVHTVSLNNRGNACQEAGSGSIHEVCSTGDSFPGQLGRNRGPKVNTVPPLDSMQPGVCQQSVPVSDKYLEIKKQEGEAVCADFSPCLFSDHLEQSMSGKVFQVCSETPDDLLDDVEIQGHTSFGEGDIMERSAVFNGSILRRESSRSPSPVTHASKSQSLHRASRKLESSEESDSTEDEDLPCFQHLLSRISNTPELTRCSSAVTQRMPEKAEGTQAPWKGSSSDCNNEVIMIEASQEHQFSEDPRCSGSMFSSQHSAAQGSTANANSQDSNFIPPSKQRSHQCGNEEAFLSDKELISDNEEMATCLEEDNDQEEDSIIPDSEASGYESETNLSEDCSQSDILTTQQRATMKYNLIKLQQEMAHLEAVLEQRGNQPSGHSPSLLADPCALEDLPDLEPNMSGAAILTSKNINENPVSQNLKSACDDKFQLQHLEGPTSGDDESGMGRPSPFKSPLAGSRGSAHGCSRHLQKRNSPSQEELLQPAGSEASSEPHNSTGQSCLPRRELEGTPYLGSGISLFSSRDPESESPKEPAHIGTTPASTSALKIPQGQVAFRSAAAAGADKAVVGIVSKIKPELTSSEERADRDISMVVSGLTPKEVMTVQKFAEKYRLTLTDAITEETTHVIIKTDAEFVCERTLKYFLGIAGGKWIVSYSWVVRSIQERRLLNVHEFEVKGDVVTGRNHQGPRRSRESREKLFKGLQVYCCEPFTNMPKDELERMLQLCGASVVKELPSLTHDTGAHLVVIVQPSAWTEDSNCPDIGQLCKARLVMWDWVLDSLSSYRCRDLDAYLVQNITCDSSEPQDSND.

Met1 bears the N-acetylmethionine mark. The RING-type zinc finger occupies Cys24–Lys65. Lys109 is covalently cross-linked (Glycyl lysine isopeptide (Lys-Gly) (interchain with G-Cter in SUMO2)). At Ser114 the chain carries Phosphoserine. Residues Lys165–Ser176 show a composition bias toward basic residues. Residues Lys165 to Val198 are disordered. Lys298 participates in a covalent cross-link: Glycyl lysine isopeptide (Lys-Gly) (interchain with G-Cter in SUMO2). Positions Ser321 to Ser332 are enriched in polar residues. The disordered stretch occupies residues Ser321 to Gly362. Residue Lys336 forms a Glycyl lysine isopeptide (Lys-Gly) (interchain with G-Cter in SUMO2) linkage. A compositionally biased stretch (polar residues) spans His352–Gly362. Ser392 is modified (phosphoserine). Residues Lys440, Lys456, and Lys512 each participate in a glycyl lysine isopeptide (Lys-Gly) (interchain with G-Cter in SUMO2) cross-link. Disordered regions lie at residues Pro492–Ile581 and Ser640–Thr767. Positions Gln538–Leu556 are enriched in polar residues. 2 stretches are compositionally biased toward basic and acidic residues: residues Gln557 to Pro572 and Ala669 to His679. 3 positions are modified to phosphoserine: Ser686, Ser706, and Ser717. Composition is skewed to polar residues over residues Thr702–Asp733 and Ser758–Thr767. Position 831 is a phosphoserine (Ser831). 5 disordered regions span residues Lys864–Glu899, Gly947–Met995, Val1030–Asp1056, Arg1147–Asp1185, and Cys1205–Asp1230. Positions Gly947 to Ser972 are enriched in polar residues. Residue Ser971 is modified to Phosphoserine; by CHEK2. Residues Ile973–Ser991 show a composition bias toward basic and acidic residues. Position 992 is a phosphoserine (Ser992). Lys1048 participates in a covalent cross-link: Glycyl lysine isopeptide (Lys-Gly) (interchain with G-Cter in SUMO2). The span at Arg1151–His1166 shows a compositional bias: polar residues. Phosphoserine is present on residues Ser1152, Ser1154, Ser1174, and Ser1180. Residues Ser1175 to Asp1185 are compositionally biased toward acidic residues. Residue Ser1241 is modified to Phosphoserine. The tract at residues His1244–Cys1289 is disordered. The segment covering Ser1255–Ile1279 has biased composition (polar residues). Residues Ser1297 and Ser1303 each carry the phosphoserine modification. Residues Glu1313–Ile1323 are compositionally biased toward acidic residues. The segment at Glu1313 to Ser1343 is disordered. Residues Glu1333–Ser1343 are compositionally biased toward polar residues. Ser1343 is subject to Phosphoserine. Thr1350 bears the Phosphothreonine mark. An interaction with PALB2 region spans residues Arg1353–Gln1380. Phosphoserine is present on residues Ser1413, Ser1481, and Ser1495. The tract at residues His1437 to Thr1547 is disordered. Positions Glu1492–Ser1504 are enriched in polar residues. The segment covering Arg1527 to Ala1538 has biased composition (basic and acidic residues). 2 BRCT domains span residues Ser1585–Val1679 and Ser1698–Val1797.

As to quaternary structure, heterodimer with BARD1. Part of the BRCA1-associated genome surveillance complex (BASC), which contains BRCA1, MSH2, MSH6, MLH1, ATM, BLM, PMS2 and the MRE11-RAD50-NBN protein (MRN) complex. This association could be a dynamic process changing throughout the cell cycle and within subnuclear domains. Component of the BRCA1-A complex, at least composed of BRCA1, BARD1, UIMC1/RAP80, ABRAXAS1, BRCC3/BRCC36, BABAM2 and BABAM1/NBA1. Interacts (via the BRCT domains) with ABRAXAS1 (phosphorylated form); this is important for recruitment to sites of DNA damage. Can form a heterotetramer with two molecules of ABRAXAS1 (phosphorylated form). Component of the BRCA1-RBBP8 complex. Interacts (via the BRCT domains) with RBBP8 ('Ser-327' phosphorylated form); the interaction ubiquitinates RBBP8, regulates CHEK1 activation, and involves RBBP8 in BRCA1-dependent G2/M checkpoint control on DNA damage. Associates with RNA polymerase II holoenzyme. Interacts with SMC1A, NELFB, DCLRE1C, CLSPN. CHEK1, CHEK2, BAP1, BRCC3, UBXN1 and PCLAF. Interacts (via BRCT domains) with BRIP1 (phosphorylated form). Interacts with FANCD2 (ubiquitinated form). Interacts with H2AX (phosphorylated on 'Ser-140'). Interacts (via the BRCT domains) with ACACA (phosphorylated form); the interaction prevents dephosphorylation of ACACA. Part of a BRCA complex containing BRCA1, BRCA2 and PALB2. Interacts directly with PALB2; the interaction is essential for its function in HRR. Interacts directly with BRCA2; the interaction occurs only in the presence of PALB2 which serves as the bridging protein. Interacts (via the BRCT domains) with LMO4; the interaction represses the transcriptional activity of BRCA1. Interacts (via the BRCT domains) with CCAR2 (via N-terminus); the interaction represses the transcriptional activator activity of BRCA1. Interacts with EXD2. Interacts (via C-terminus) with DHX9; this interaction is direct and links BRCA1 to the RNA polymerase II holoenzyme. Interacts with DNA helicase ZGRF1; the interaction is increased following DNA damage induction. In terms of processing, phosphorylated in response to IR, UV, and various stimuli that cause checkpoint activation, probably by ATM or ATR. Phosphorylation at Ser-971 by CHEK2 regulates mitotic spindle assembly. Phosphorylation by AURKA regulates centrosomal microtubule nucleation. Autoubiquitinated, undergoes 'Lys-6'-linked polyubiquitination. 'Lys-6'-linked polyubiquitination does not promote degradation. In the embryo, expressed in otic vesicles at day 9.5. At day 10.5, this expression decreases and high levels are found in the neuroectoderm. At days 11-12.5, high levels in differentiating keratinocytes and whisker pad primordia. At days 14-17, expression also observed in kidney epithelial cells. In the adult, highest levels found in spleen, thymus, lymph nodes, epithelial organs, and alveolar and ductal epithelial cells of the mammary gland. Very low levels in brain, kidney, and skin. No expression in heart, liver or lung.

It localises to the nucleus. The protein resides in the chromosome. The protein localises to the cytoplasm. It catalyses the reaction S-ubiquitinyl-[E2 ubiquitin-conjugating enzyme]-L-cysteine + [acceptor protein]-L-lysine = [E2 ubiquitin-conjugating enzyme]-L-cysteine + N(6)-ubiquitinyl-[acceptor protein]-L-lysine.. The protein operates within protein modification; protein ubiquitination. Its function is as follows. E3 ubiquitin-protein ligase that specifically mediates the formation of 'Lys-6'-linked polyubiquitin chains and plays a central role in DNA repair by facilitating cellular responses to DNA damage. It is unclear whether it also mediates the formation of other types of polyubiquitin chains. The BRCA1-BARD1 heterodimer coordinates a diverse range of cellular pathways such as DNA damage repair, ubiquitination and transcriptional regulation to maintain genomic stability. Regulates centrosomal microtubule nucleation. Required for appropriate cell cycle arrests after ionizing irradiation in both the S-phase and the G2 phase of the cell cycle. Required for FANCD2 targeting to sites of DNA damage. Inhibits lipid synthesis by binding to inactive phosphorylated ACACA and preventing its dephosphorylation. Contributes to homologous recombination repair (HRR) via its direct interaction with PALB2, fine-tunes recombinational repair partly through its modulatory role in the PALB2-dependent loading of BRCA2-RAD51 repair machinery at DNA breaks. Component of the BRCA1-RBBP8 complex which regulates CHEK1 activation and controls cell cycle G2/M checkpoints on DNA damage via BRCA1-mediated ubiquitination of RBBP8. Acts as a transcriptional activator. The protein is Breast cancer type 1 susceptibility protein homolog (Brca1) of Mus musculus (Mouse).